A 340-amino-acid polypeptide reads, in one-letter code: Heat-inducible transcription repressor HrcA (340 aa).

This sequence belongs to the HrcA family.

Functionally, negative regulator of class I heat shock genes (grpE-dnaK-dnaJ and groELS operons). Prevents heat-shock induction of these operons. This chain is Heat-inducible transcription repressor HrcA, found in Burkholderia mallei (strain NCTC 10247).